The primary structure comprises 307 residues: Beta-lactamase (307 aa).

The signal sequence occupies residues 1 to 26 (MKLWFSTLKLKKAAAVLLFSCVALAG). A lipid anchor (N-palmitoyl cysteine) is attached at Cys27. Cys27 carries the S-diacylglycerol cysteine lipid modification. The Acyl-ester intermediate role is filled by Ser86. Glu182 functions as the Proton acceptor in the catalytic mechanism. 248 to 250 (KTG) contacts substrate.

Belongs to the class-A beta-lactamase family. Large exopenicillinase is the primary secretion product; it can be converted to small exopenicillinase.

It is found in the cell membrane. The catalysed reaction is a beta-lactam + H2O = a substituted beta-amino acid. This Bacillus licheniformis protein is Beta-lactamase (penP).